A 177-amino-acid chain; its full sequence is Large ribosomal subunit protein uL6 (177 aa).

This sequence belongs to the universal ribosomal protein uL6 family. In terms of assembly, part of the 50S ribosomal subunit.

Its function is as follows. This protein binds to the 23S rRNA, and is important in its secondary structure. It is located near the subunit interface in the base of the L7/L12 stalk, and near the tRNA binding site of the peptidyltransferase center. The sequence is that of Large ribosomal subunit protein uL6 from Actinobacillus succinogenes (strain ATCC 55618 / DSM 22257 / CCUG 43843 / 130Z).